A 147-amino-acid chain; its full sequence is Hemoglobin subunit beta (147 aa).

Residue Val-2 is modified to N-acetylvaline. Residues 3 to 147 (NLTSDEKTAV…VANALAHKYH (145 aa)) form the Globin domain. The residue at position 45 (Ser-45) is a Phosphoserine. Lys-60 is modified (N6-acetyllysine). Residue His-64 coordinates heme b. Lys-83 is subject to N6-acetyllysine. His-93 is a binding site for heme b. Residue Cys-94 is modified to S-nitrosocysteine. Residue Lys-145 is modified to N6-acetyllysine.

It belongs to the globin family. Heterotetramer of two alpha chains and two beta chains. Red blood cells.

Its function is as follows. Involved in oxygen transport from the lung to the various peripheral tissues. The protein is Hemoglobin subunit beta (HBB) of Dasypus novemcinctus (Nine-banded armadillo).